The following is a 246-amino-acid chain: TLC domain-containing protein 2 (246 aa).

The next 6 membrane-spanning stretches (helical) occupy residues 5 to 25, 43 to 63, 79 to 99, 107 to 127, 128 to 148, and 199 to 219; these read SVILTTGSSVGFFKLVNYGLG, ISTSFVHSLITGVWSVLCFCM, SHALVSVSIGYFIYDFLDMVI, WELLFHHVVVITCFGISVLTC, RYVGFAVVALLVEINSVFLHL, and FSYTIGSVGLAIMTAMNIVLF. The TLC domain maps to 35-231; it reads RNAWKWNNIS…LMRSDFMKAS (197 aa).

The protein belongs to the TLCD family.

It localises to the cell membrane. Functionally, regulates the composition and fluidity of the plasma membrane. Inhibits the incorporation of membrane-fluidizing phospholipids containing omega-3 long-chain polyunsaturated fatty acids (LCPUFA) and thereby promotes membrane rigidity. Does not appear to have any effect on LCPUFA synthesis. The sequence is that of TLC domain-containing protein 2 (tlcd2) from Danio rerio (Zebrafish).